The following is a 306-amino-acid chain: Homoserine O-acetyltransferase (306 aa).

Catalysis depends on Cys-142, which acts as the Acyl-thioester intermediate. Substrate is bound by residues Lys-163 and Ser-192. Catalysis depends on His-235, which acts as the Proton acceptor. Glu-237 is a catalytic residue. Position 249 (Arg-249) interacts with substrate.

The protein belongs to the MetA family.

The protein resides in the cytoplasm. The enzyme catalyses L-homoserine + acetyl-CoA = O-acetyl-L-homoserine + CoA. Its pathway is amino-acid biosynthesis; L-methionine biosynthesis via de novo pathway; O-acetyl-L-homoserine from L-homoserine: step 1/1. In terms of biological role, transfers an acetyl group from acetyl-CoA to L-homoserine, forming acetyl-L-homoserine. This is Homoserine O-acetyltransferase from Brucella abortus (strain S19).